The chain runs to 84 residues: RNA-binding protein Hfq (84 aa).

The 61-residue stretch at 9 to 69 (DRFLNILRTN…VSTIMPESFV (61 aa)) folds into the Sm domain.

This sequence belongs to the Hfq family. As to quaternary structure, homohexamer.

Its function is as follows. RNA chaperone that binds small regulatory RNA (sRNAs) and mRNAs to facilitate mRNA translational regulation in response to envelope stress, environmental stress and changes in metabolite concentrations. Also binds with high specificity to tRNAs. In Thermosipho africanus (strain TCF52B), this protein is RNA-binding protein Hfq.